The primary structure comprises 396 residues: L-lactate dehydrogenase (396 aa).

One can recognise an FMN hydroxy acid dehydrogenase domain in the interval 1-380 (MIISAASDYR…TQDSLVQELS (380 aa)). Tyr24 serves as a coordination point for substrate. Positions 106 and 127 each coordinate FMN. Tyr129 contributes to the substrate binding site. Thr155 provides a ligand contact to FMN. Arg164 is a substrate binding site. Lys251 contacts FMN. The active-site Proton acceptor is the His275. Residue Arg278 coordinates substrate. 306–330 (DSGIRNGLDVVRMIALGADTVLLGR) serves as a coordination point for FMN.

It belongs to the FMN-dependent alpha-hydroxy acid dehydrogenase family. The cofactor is FMN.

It is found in the cell inner membrane. The enzyme catalyses (S)-lactate + A = pyruvate + AH2. Catalyzes the conversion of L-lactate to pyruvate. Is coupled to the respiratory chain. This is L-lactate dehydrogenase from Escherichia coli (strain SMS-3-5 / SECEC).